A 204-amino-acid polypeptide reads, in one-letter code: Inactive ribonuclease-like protein 9 (204 aa).

The N-terminal stretch at 1–26 (MMRTLITTHPLLLLLLLQQLLQPVQF) is a signal peptide. 3 disulfides stabilise this stretch: cysteine 97/cysteine 152, cysteine 115/cysteine 167, and cysteine 122/cysteine 129. 2 N-linked (GlcNAc...) asparagine glycosylation sites follow: asparagine 130 and asparagine 142.

Belongs to the pancreatic ribonuclease family.

The protein localises to the secreted. Does not exhibit any ribonuclease activity. The polypeptide is Inactive ribonuclease-like protein 9 (RNASE9) (Macaca mulatta (Rhesus macaque)).